Consider the following 212-residue polypeptide: Large ribosomal subunit protein uL3 (212 aa).

Residues 134–155 (RNSHGNSLSHRAPGSIGQNQSP) form a disordered region. Gln153 carries the post-translational modification N5-methylglutamine.

It belongs to the universal ribosomal protein uL3 family. As to quaternary structure, part of the 50S ribosomal subunit. Forms a cluster with proteins L14 and L19. Methylated by PrmB.

In terms of biological role, one of the primary rRNA binding proteins, it binds directly near the 3'-end of the 23S rRNA, where it nucleates assembly of the 50S subunit. This chain is Large ribosomal subunit protein uL3, found in Pseudoalteromonas atlantica (strain T6c / ATCC BAA-1087).